The chain runs to 716 residues: Polyribonucleotide nucleotidyltransferase (716 aa).

2 residues coordinate Mg(2+): Asp485 and Asp491. The region spanning 552-611 is the KH domain; it reads PKITTISVPKEKIRDVIGSGGKVIREIVEYSGAKVDIGDDGTVTIAASNDEQAQKAIARI. In terms of domain architecture, S1 motif spans 621–689; the sequence is GRIYEGKVVK…DRGKVKLSMR (69 aa).

This sequence belongs to the polyribonucleotide nucleotidyltransferase family. The cofactor is Mg(2+).

The protein localises to the cytoplasm. The catalysed reaction is RNA(n+1) + phosphate = RNA(n) + a ribonucleoside 5'-diphosphate. Involved in mRNA degradation. Catalyzes the phosphorolysis of single-stranded polyribonucleotides processively in the 3'- to 5'-direction. This Gluconobacter oxydans (strain 621H) (Gluconobacter suboxydans) protein is Polyribonucleotide nucleotidyltransferase.